Consider the following 917-residue polypeptide: MATEKGHGRDDEERVPLTRGSTEFRNSIDSFDYSSSTASLSLAVIDRINNSTQDAALGEKGPRDDDDDRYWDDDVEYDVEDADYIPSGGKPMHKSVKIALWTLLFLSLGGWSLAFVLFIFRSHDTYETPISSEDNISSGGLRGDRITLDDVLGEEWMPRHHFISWFPGPNGEDGLLLEKDGLGSTGYLRVEDIVSRKDTKSSKGSIVLMQKNTFTVGGETVICSQVWPSPDLKTVLVLSEKKQNWRHSFTGKYWLFDVDTQTGQPLDPAAQDQRIQLASWSPQSDAVVFTRDNNMFLRKLSSKEVTTITSDGGVDLFYGVPDWVYEEEVFSGNSATWWAHDGNYIAFLRTNESAVPEYPVQYFVSRPSGEDPNLGEENYPEVREIKYPKAGAPNPIVDLQFYDVRKGEIFSVDVADRFPDDYRLIIEVLWASNGKILVRETNRESDILIIAAIDVLSRTGKIVRKEDINALDGGWVEPTQSTRFIPADPSNGRPEDGYIDTVIHEGRDQLAYFTPLDNPKPLILTKGPSEIVNSPSGVDLKRGLVYFVVAGNEPWERHVYSVKFDGTALQPVTNVSESSYYDVSFSDGAGYALLNFQGPKVPWQKVISTPANENPFEEIIEQNNHLSRKLRLFSLESKVFQYINIDGFSLPVLERRPPNFDPTKKYPVLFYLYGGPGSQTVDKKFRVDFQSYVASTLGYIVVTVDGRGTGYIGRKSRSIVRGKLGHYEARDQIEVAKKWAAKPYVDESRMAIWGWSYGGFMTLKTIEEDGGRTFQYGMAVAPVTDWRYYDSIYAERYMHTPQHNPQGYDSSAISNTTALANNVRFLVMHGTADDNVHIQNTLTLLDKLDLANVDNYDVHVFPDSNHNINFHNAHKIVYTRLADWLVNAFNGQWLKTNNPTPNDSLFRRAATWAGLSI.

Residues 1-16 (MATEKGHGRDDEERVP) are compositionally biased toward basic and acidic residues. A disordered region spans residues 1-21 (MATEKGHGRDDEERVPLTRGS). Topologically, residues 1-99 (MATEKGHGRD…KPMHKSVKIA (99 aa)) are cytoplasmic. The chain crosses the membrane as a helical; Signal-anchor for type II membrane protein span at residues 100-120 (LWTLLFLSLGGWSLAFVLFIF). Residues 121–917 (RSHDTYETPI…RAATWAGLSI (797 aa)) are Vacuolar-facing. 3 N-linked (GlcNAc...) asparagine glycosylation sites follow: N135, N351, and N574. Residue S756 is the Charge relay system of the active site. An N-linked (GlcNAc...) asparagine glycan is attached at N815. Residues D833 and H866 each act as charge relay system in the active site. The N-linked (GlcNAc...) asparagine glycan is linked to N902.

It belongs to the peptidase S9B family.

The protein localises to the vacuole membrane. It catalyses the reaction Release of an N-terminal dipeptide, Xaa-Yaa-|-Zaa-, from a polypeptide, preferentially when Yaa is Pro, provided Zaa is neither Pro nor hydroxyproline.. Type IV dipeptidyl-peptidase which removes N-terminal dipeptides sequentially from polypeptides having unsubstituted N-termini provided that the penultimate residue is proline. This chain is Probable dipeptidyl-aminopeptidase B (DAPB), found in Ajellomyces capsulatus (strain H88) (Darling's disease fungus).